The chain runs to 194 residues: RNA polymerase II subunit A C-terminal domain phosphatase SSU72 like protein 1 (194 aa).

Belongs to the SSU72 phosphatase family.

The protein resides in the nucleus. It catalyses the reaction O-phospho-L-seryl-[protein] + H2O = L-seryl-[protein] + phosphate. The catalysed reaction is O-phospho-L-threonyl-[protein] + H2O = L-threonyl-[protein] + phosphate. Protein phosphatase that catalyzes the dephosphorylation of the C-terminal domain of RNA polymerase II. Plays a role in RNA processing and termination. This is RNA polymerase II subunit A C-terminal domain phosphatase SSU72 like protein 1 from Homo sapiens (Human).